The chain runs to 343 residues: L-threonine 3-dehydrogenase (343 aa).

C39 contacts Zn(2+). Residues T41 and H44 each act as charge relay system in the active site. Residues H64, E65, C94, C97, C100, and C108 each contribute to the Zn(2+) site. NAD(+)-binding positions include I176, D196, R201, 263–265 (LGI), and 287–288 (IY).

Belongs to the zinc-containing alcohol dehydrogenase family. Homotetramer. Zn(2+) is required as a cofactor.

The protein resides in the cytoplasm. It catalyses the reaction L-threonine + NAD(+) = (2S)-2-amino-3-oxobutanoate + NADH + H(+). It participates in amino-acid degradation; L-threonine degradation via oxydo-reductase pathway; glycine from L-threonine: step 1/2. Its function is as follows. Catalyzes the NAD(+)-dependent oxidation of L-threonine to 2-amino-3-ketobutyrate. This Anaeromyxobacter sp. (strain Fw109-5) protein is L-threonine 3-dehydrogenase.